An 857-amino-acid chain; its full sequence is Envelope glycoprotein B (857 aa).

An N-terminal signal peptide occupies residues Met-1 to Gly-21. Residues Ala-22–Pro-732 are Virion surface-facing. Disulfide bonds link Cys-51–Cys-528, Cys-68–Cys-484, Cys-141–Cys-206, Cys-295–Cys-342, and Cys-551–Cys-588. Asn-76 carries an N-linked (GlcNAc...) asparagine; by host glycan. Residues Ile-108–Ala-114 are involved in fusion and/or binding to host membrane. Asn-163 carries an N-linked (GlcNAc...) asparagine; by host glycan. The segment at Gly-192 to Thr-200 is involved in fusion and/or binding to host membrane. N-linked (GlcNAc...) asparagine; by host glycosylation is found at Asn-290, Asn-329, Asn-348, and Asn-395. Residues Glu-398–Leu-453 form a disordered region. Residues Ser-404 to Pro-415 show a composition bias toward pro residues. Low complexity predominate over residues Ser-416–Ala-425. 3 N-linked (GlcNAc...) asparagine; by host glycosylation sites follow: Asn-436, Asn-563, and Asn-629. The tract at residues Phe-561–Ala-620 is oligomerization. Hydrophobic membrane proximal region stretches follow at residues Leu-678–Lys-730 and Asn-709–Phe-729. The chain crosses the membrane as a helical span at residues Phe-733 to Thr-753. Residues Arg-754–Phe-857 lie on the Intravirion side of the membrane. The disordered stretch occupies residues Phe-832–Phe-857. Low complexity predominate over residues Thr-845–Phe-857.

The protein belongs to the herpesviridae glycoprotein B family. In terms of assembly, homotrimer; disulfide-linked. Binds to heparan sulfate proteoglycans. Interacts with gH/gL heterodimer. In terms of processing, a proteolytic cleavage by host furin generates two subunits that remain linked by disulfide bonds.

It is found in the virion membrane. Its subcellular location is the host cell membrane. The protein localises to the host endosome membrane. The protein resides in the host Golgi apparatus membrane. Functionally, envelope glycoprotein that forms spikes at the surface of virion envelope. Essential for the initial attachment to heparan sulfate moieties of the host cell surface proteoglycans. Involved in fusion of viral and cellular membranes leading to virus entry into the host cell. Following initial binding to its host receptors, membrane fusion is mediated by the fusion machinery composed at least of gB and the heterodimer gH/gL. May be involved in the fusion between the virion envelope and the outer nuclear membrane during virion egress. In Epstein-Barr virus (strain B95-8) (HHV-4), this protein is Envelope glycoprotein B.